We begin with the raw amino-acid sequence, 432 residues long: Enolase (432 aa).

Gln167 contacts (2R)-2-phosphoglycerate. The Proton donor role is filled by Glu209. Mg(2+) is bound by residues Asp246, Glu291, and Asp318. The (2R)-2-phosphoglycerate site is built by Lys343, Arg372, Ser373, and Lys394. Residue Lys343 is the Proton acceptor of the active site.

Belongs to the enolase family. Component of the RNA degradosome, a multiprotein complex involved in RNA processing and mRNA degradation. Mg(2+) serves as cofactor.

The protein localises to the cytoplasm. Its subcellular location is the secreted. It is found in the cell surface. The catalysed reaction is (2R)-2-phosphoglycerate = phosphoenolpyruvate + H2O. Its pathway is carbohydrate degradation; glycolysis; pyruvate from D-glyceraldehyde 3-phosphate: step 4/5. Functionally, catalyzes the reversible conversion of 2-phosphoglycerate (2-PG) into phosphoenolpyruvate (PEP). It is essential for the degradation of carbohydrates via glycolysis. In Pseudoalteromonas translucida (strain TAC 125), this protein is Enolase.